A 149-amino-acid chain; its full sequence is Ribonuclease HI (149 aa).

The RNase H type-1 domain occupies Met1 to Arg142. Mg(2+)-binding residues include Asp10, Glu48, Asp70, and Asp134.

It belongs to the RNase H family. In terms of assembly, monomer. Mg(2+) serves as cofactor.

Its subcellular location is the cytoplasm. It catalyses the reaction Endonucleolytic cleavage to 5'-phosphomonoester.. In terms of biological role, endonuclease that specifically degrades the RNA of RNA-DNA hybrids. This is Ribonuclease HI from Caulobacter vibrioides (strain ATCC 19089 / CIP 103742 / CB 15) (Caulobacter crescentus).